Here is a 317-residue protein sequence, read N- to C-terminus: Melanocyte-stimulating hormone receptor (317 aa).

The Extracellular portion of the chain corresponds to 1–37 (MPMQGAQRKLLGSLNSTPTATSNLGLAANHTGAPCLE). A glycan (N-linked (GlcNAc...) asparagine) is linked at asparagine 29. Residues 38-63 (VSIPDGLFLSLGLVSLVENVLVVAAV) traverse the membrane as a helical segment. Topologically, residues 64-72 (AKNRNLHSS) are cytoplasmic. Residues 73-93 (MYCFICCLALSDLLVSGSNML) form a helical membrane-spanning segment. Residues 94-118 (ETAVILLLETGALATRTSVVQQLHN) lie on the Extracellular side of the membrane. A helical transmembrane segment spans residues 119–140 (TINVLTCSSMLCSLCFLGAIAV). At 141–163 (DRYISIFYALRYHSIMTLPRAQR) the chain is on the cytoplasmic side. The helical transmembrane segment at 164 to 183 (AIAAIWVASVLSSTLFITYY) threads the bilayer. At 184-191 (DHAAVLLC) the chain is on the extracellular side. A helical transmembrane segment spans residues 192–211 (LVVFFLAMLVLMAVLYVHML). At 212–240 (ARACQHAHGIIRLHKRQTPAHQGFGLRGA) the chain is on the cytoplasmic side. A helical membrane pass occupies residues 241–266 (ATLTILLGIFFLCWGPFFLHLTLVVF). The Extracellular segment spans residues 267–279 (CPQHLTCSCIFKN). Residues 280–300 (FKVFLTLIICNTIIDPLIYAF) traverse the membrane as a helical segment. Residues 301–317 (RSQELRRTLKEVLLCSW) are Cytoplasmic-facing. Cysteine 315 carries S-palmitoyl cysteine lipidation.

This sequence belongs to the G-protein coupled receptor 1 family. In terms of assembly, interacts with MGRN1, but does not undergo MGRN1-mediated ubiquitination; this interaction competes with GNAS-binding and thus inhibits agonist-induced cAMP production. Interacts with OPN3; the interaction results in a decrease in MC1R-mediated cAMP signaling and ultimately a decrease in melanin production in melanocytes.

It localises to the cell membrane. In terms of biological role, receptor for MSH (alpha, beta and gamma) and ACTH. The activity of this receptor is mediated by G proteins which activate adenylate cyclase. Mediates melanogenesis, the production of eumelanin (black/brown) and phaeomelanin (red/yellow), via regulation of cAMP signaling in melanocytes. The chain is Melanocyte-stimulating hormone receptor (MC1R) from Saguinus oedipus (Cotton-top tamarin).